We begin with the raw amino-acid sequence, 147 residues long: DNA-directed RNA polymerase RPB6 homolog (147 aa).

Belongs to the archaeal RpoK/eukaryotic RPB6 RNA polymerase subunit family. In terms of assembly, part of the viral DNA-directed RNA polymerase that consists of 8 polII-like subunits (RPB1, RPB2, RPB3, RPB5, RPB6, RPB7, RPB9, RPB10), a capping enzyme and a termination factor.

It localises to the host cytoplasm. The protein resides in the virion. In terms of biological role, component of the DNA-directed RNA polymerase (RNAP) that catalyzes the transcription in the cytoplasm of viral DNA into RNA using the four ribonucleoside triphosphates as substrates. The protein is DNA-directed RNA polymerase RPB6 homolog of Ornithodoros (relapsing fever ticks).